A 1007-amino-acid chain; its full sequence is Integrator complex subunit 8 (1007 aa).

Positions 19–24 match the WFEF motif motif; it reads WFEFLL. The segment covering 56 to 78 has biased composition (polar residues); that stretch reads TAQESVGTPGSDLQNLNQTPSNS. Residues 56-112 are disordered; that stretch reads TAQESVGTPGSDLQNLNQTPSNSGPIPGVVGGAPAPTTPTASGGVGMPHSPQRPAEK. The segment covering 79 to 97 has biased composition (low complexity); the sequence is GPIPGVVGGAPAPTTPTAS.

This sequence belongs to the Integrator subunit 8 family. In terms of assembly, belongs to the multiprotein complex Integrator, at least composed of IntS1, IntS2, IntS3, IntS4, omd/IntS5, IntS6, defl/IntS7, IntS8, IntS9, IntS10, IntS11, IntS12, asun/IntS13, IntS14 and IntS15. The core complex associates with protein phosphatase 2A subunits mts/PP2A and Pp2A-29B, to form the Integrator-PP2A (INTAC) complex.

Its subcellular location is the nucleus. The protein resides in the chromosome. Component of the integrator complex, a multiprotein complex that terminates RNA polymerase II (Pol II) transcription in the promoter-proximal region of genes. The integrator complex provides a quality checkpoint during transcription elongation by driving premature transcription termination of transcripts that are unfavorably configured for transcriptional elongation: the complex terminates transcription by (1) catalyzing dephosphorylation of the C-terminal domain (CTD) of Pol II subunit Polr2A/Rbp1 and Spt5, and (2) degrading the exiting nascent RNA transcript via endonuclease activity. The integrator complex is also involved in the 3'-end processing of the U7 snRNA, and also the spliceosomal snRNAs U1, U2, U4 and U5. Within the integrator complex, INTS8 is required for the recruitment of protein phosphatase 2A (PP2A) to transcription pause-release checkpoint. In Drosophila melanogaster (Fruit fly), this protein is Integrator complex subunit 8.